We begin with the raw amino-acid sequence, 321 residues long: Manganese-dependent ADP-ribose/CDP-alcohol diphosphatase (321 aa).

The Zn(2+) site is built by D25, Q27, D72, N107, H226, H263, and H265.

The protein belongs to the ADPRibase-Mn family. As to quaternary structure, monomer. It depends on Mg(2+) as a cofactor.

It catalyses the reaction CDP-choline + H2O = phosphocholine + CMP + 2 H(+). The enzyme catalyses ADP-D-ribose + H2O = D-ribose 5-phosphate + AMP + 2 H(+). The catalysed reaction is CDP-glycerol + H2O = sn-glycerol 3-phosphate + CMP + 2 H(+). Hydrolyzes ADP-ribose, IDP-ribose, CDP-glycerol, CDP-choline and CDP-ethanolamine, but not other non-reducing ADP-sugars or CDP-glucose. The chain is Manganese-dependent ADP-ribose/CDP-alcohol diphosphatase from Oryza sativa subsp. japonica (Rice).